Reading from the N-terminus, the 445-residue chain is Histidine--tRNA ligase (445 aa).

This sequence belongs to the class-II aminoacyl-tRNA synthetase family. As to quaternary structure, homodimer.

It is found in the cytoplasm. It catalyses the reaction tRNA(His) + L-histidine + ATP = L-histidyl-tRNA(His) + AMP + diphosphate + H(+). The sequence is that of Histidine--tRNA ligase from Mycoplasma mobile (strain ATCC 43663 / 163K / NCTC 11711) (Mesomycoplasma mobile).